We begin with the raw amino-acid sequence, 122 residues long: Riboflavin kinase (122 aa).

Residue 4 to 9 (GFGEGA) participates in CDP binding. Residues Thr-33 and Asn-35 each coordinate Mg(2+). 2 residues coordinate FMN: Thr-84 and Glu-92. CDP is bound at residue 97 to 100 (VNLR).

It belongs to the archaeal riboflavin kinase family. Requires Mg(2+) as cofactor.

It catalyses the reaction riboflavin + CTP = CDP + FMN + H(+). It functions in the pathway cofactor biosynthesis; FMN biosynthesis; FMN from riboflavin (CTP route): step 1/1. Its function is as follows. Catalyzes the CTP-dependent phosphorylation of riboflavin (vitamin B2) to form flavin mononucleotide (FMN). The polypeptide is Riboflavin kinase (Methanothermobacter thermautotrophicus (strain ATCC 29096 / DSM 1053 / JCM 10044 / NBRC 100330 / Delta H) (Methanobacterium thermoautotrophicum)).